Consider the following 449-residue polypeptide: Probable glucuronosyltransferase 47 A (449 aa).

At 1 to 31 (MEHPLECADSCSLAMSWFCNKKCRGWGLMKR) the chain is on the cytoplasmic side. Residues 32-52 (TVVASGLRSVVLLLLFIYFVQ) form a helical; Signal-anchor for type II membrane protein membrane-spanning segment. Topologically, residues 53–449 (DVTAEMGHQR…GDLYPWGNDL (397 aa)) are lumenal. Residues N172 and N433 are each glycosylated (N-linked (GlcNAc...) asparagine).

It belongs to the glycosyltransferase 47 family. As to expression, mostly expressed in newly formed or expanding tissues.

The protein localises to the golgi apparatus membrane. Functionally, involved in the synthesis of glucuronoxylan hemicellulose in secondary cell walls. This Physcomitrium patens (Spreading-leaved earth moss) protein is Probable glucuronosyltransferase 47 A.